The following is a 445-amino-acid chain: Na(+)-translocating NADH-quinone reductase subunit A (445 aa).

This sequence belongs to the NqrA family. As to quaternary structure, composed of six subunits; NqrA, NqrB, NqrC, NqrD, NqrE and NqrF.

The catalysed reaction is a ubiquinone + n Na(+)(in) + NADH + H(+) = a ubiquinol + n Na(+)(out) + NAD(+). Its function is as follows. NQR complex catalyzes the reduction of ubiquinone-1 to ubiquinol by two successive reactions, coupled with the transport of Na(+) ions from the cytoplasm to the periplasm. NqrA to NqrE are probably involved in the second step, the conversion of ubisemiquinone to ubiquinol. This is Na(+)-translocating NADH-quinone reductase subunit A from Marinomonas sp. (strain MWYL1).